A 123-amino-acid chain; its full sequence is Diacylglycerol kinase (123 aa).

Residues 15 to 32 (ILNATGYSLAGFLAAFRG) form a helical membrane-spanning segment. E33 contacts a divalent metal cation. Helical transmembrane passes span 35-55 (AFRQ…LLDV), 61-81 (ALMI…SAIE), and 102-122 (GSAA…TILL). E74 acts as the Proton acceptor in catalysis. E81 provides a ligand contact to a divalent metal cation.

Belongs to the bacterial diacylglycerol kinase family. Requires Mg(2+) as cofactor.

It localises to the cell inner membrane. It catalyses the reaction a 1,2-diacyl-sn-glycerol + ATP = a 1,2-diacyl-sn-glycero-3-phosphate + ADP + H(+). Catalyzes the ATP-dependent phosphorylation of sn-l,2-diacylglycerol (DAG) to phosphatidic acid. Involved in the recycling of diacylglycerol produced as a by-product during membrane-derived oligosaccharide (MDO) biosynthesis. In Pseudomonas aeruginosa (strain ATCC 15692 / DSM 22644 / CIP 104116 / JCM 14847 / LMG 12228 / 1C / PRS 101 / PAO1), this protein is Diacylglycerol kinase (dgkA).